Here is a 180-residue protein sequence, read N- to C-terminus: Large ribosomal subunit protein uL5 (180 aa).

Belongs to the universal ribosomal protein uL5 family. As to quaternary structure, part of the 50S ribosomal subunit; part of the 5S rRNA/L5/L18/L25 subcomplex. Contacts the 5S rRNA and the P site tRNA. Forms a bridge to the 30S subunit in the 70S ribosome.

In terms of biological role, this is one of the proteins that bind and probably mediate the attachment of the 5S RNA into the large ribosomal subunit, where it forms part of the central protuberance. In the 70S ribosome it contacts protein S13 of the 30S subunit (bridge B1b), connecting the 2 subunits; this bridge is implicated in subunit movement. Contacts the P site tRNA; the 5S rRNA and some of its associated proteins might help stabilize positioning of ribosome-bound tRNAs. This chain is Large ribosomal subunit protein uL5, found in Leuconostoc citreum (strain KM20).